The primary structure comprises 203 residues: Outer-membrane lipoprotein carrier protein (203 aa).

The N-terminal stretch at 1 to 21 is a signal peptide; it reads MKKLIISCCLLATFSAAGAWA. The interval 174–203 is disordered; that stretch reads ALKSQQSGPISADKFKFRPPKGVTVDDQRQ.

Belongs to the LolA family. As to quaternary structure, monomer.

The protein resides in the periplasm. Functionally, participates in the translocation of lipoproteins from the inner membrane to the outer membrane. Only forms a complex with a lipoprotein if the residue after the N-terminal Cys is not an aspartate (The Asp acts as a targeting signal to indicate that the lipoprotein should stay in the inner membrane). The protein is Outer-membrane lipoprotein carrier protein of Erwinia tasmaniensis (strain DSM 17950 / CFBP 7177 / CIP 109463 / NCPPB 4357 / Et1/99).